We begin with the raw amino-acid sequence, 416 residues long: UDP-N-acetylglucosamine 1-carboxyvinyltransferase (416 aa).

22-23 (KN) lines the phosphoenolpyruvate pocket. Arginine 92 is a binding site for UDP-N-acetyl-alpha-D-glucosamine. Cysteine 116 serves as the catalytic Proton donor. The residue at position 116 (cysteine 116) is a 2-(S-cysteinyl)pyruvic acid O-phosphothioketal. Residues 121 to 125 (RPVDQ), aspartate 304, and isoleucine 326 contribute to the UDP-N-acetyl-alpha-D-glucosamine site.

The protein belongs to the EPSP synthase family. MurA subfamily.

The protein localises to the cytoplasm. The catalysed reaction is phosphoenolpyruvate + UDP-N-acetyl-alpha-D-glucosamine = UDP-N-acetyl-3-O-(1-carboxyvinyl)-alpha-D-glucosamine + phosphate. Its pathway is cell wall biogenesis; peptidoglycan biosynthesis. In terms of biological role, cell wall formation. Adds enolpyruvyl to UDP-N-acetylglucosamine. The chain is UDP-N-acetylglucosamine 1-carboxyvinyltransferase from Cupriavidus necator (strain ATCC 17699 / DSM 428 / KCTC 22496 / NCIMB 10442 / H16 / Stanier 337) (Ralstonia eutropha).